A 414-amino-acid polypeptide reads, in one-letter code: ORC1-type DNA replication protein 11 (414 aa).

Residues Val60–Ala64, Tyr207, and Arg219 each bind ATP.

It belongs to the CDC6/cdc18 family.

In terms of biological role, involved in regulation of DNA replication. The protein is ORC1-type DNA replication protein 11 (cdc6k) of Haloarcula marismortui (strain ATCC 43049 / DSM 3752 / JCM 8966 / VKM B-1809) (Halobacterium marismortui).